The following is a 201-amino-acid chain: Small ribosomal subunit protein uS4 (201 aa).

The 61-residue stretch at 91-151 (SRLDNVVYRA…EKSQKMNWFE (61 aa)) folds into the S4 RNA-binding domain.

The protein belongs to the universal ribosomal protein uS4 family. Part of the 30S ribosomal subunit. Contacts protein S5. The interaction surface between S4 and S5 is involved in control of translational fidelity.

One of the primary rRNA binding proteins, it binds directly to 16S rRNA where it nucleates assembly of the body of the 30S subunit. Its function is as follows. With S5 and S12 plays an important role in translational accuracy. The chain is Small ribosomal subunit protein uS4 from Corynebacterium efficiens (strain DSM 44549 / YS-314 / AJ 12310 / JCM 11189 / NBRC 100395).